Here is a 368-residue protein sequence, read N- to C-terminus: Terpene cyclase penA (368 aa).

6 helical membrane-spanning segments follow: residues 10-30 (IILASVAIYTKYYLSFQNGFI), 81-101 (LSLYAIAFAGSMIPMWLILLM), 118-138 (LTGLLVQGIGPGVMMCVLLAM), 192-212 (LFIASWQGWPLYIALAVGIAH), 233-253 (FALACSIISHVGLLLISFLSI), and 334-354 (LATMSLAFGPCSVALALYWTA).

The protein belongs to the membrane-bound ascI terpene cyclase family.

It is found in the membrane. The protein operates within secondary metabolite biosynthesis. Part of the gene cluster that mediates the biosynthesis of the indole diterpenes penitrems. The geranylgeranyl diphosphate (GGPP) synthase penG catalyzes the first step in penitrem biosynthesis via conversion of farnesyl pyrophosphate and isopentyl pyrophosphate into geranylgeranyl pyrophosphate (GGPP). Condensation of indole-3-glycerol phosphate with GGPP by the prenyl transferase penC then forms 3-geranylgeranylindole (3-GGI). Epoxidation by the FAD-dependent monooxygenase penM leads to a epoxidized-GGI that is substrate of the terpene cyclase penB for cyclization to yield paspaline. Paspaline is subsequently converted to 13-desoxypaxilline by the cytochrome P450 monooxygenase penP, the latter being then converted to paxilline by the cytochrome P450 monooxygenase penQ. Paxilline is converted to beta-paxitriol via C-10 ketoreduction by the short-chain dehydrogenase PC-15 which can be monoprenylated at the C-20 by the indole diterpene prenyltransferase penD. A two-step elimination (acetylation and elimination) process performed by the O-acetyltransferase PC-16 and the P.simplicissimum ptmI-ortholog not yet identified in P.crustosum, leads to the production of the prenylated form of penijanthine. The FAD-linked oxidoreductase ptmO then converts the prenylated form of penijanthine into PC-M5 which is in turn transformed into PC-M4 by the aromatic dimethylallyltransferase PC-22. A series of oxidation steps involving 4 cytochrome P450 monooxygenases (PC-21, PC-05, PC-23, PC-20) and a FAD-dependent monooxygenase (PC-14) are required for the transformation of PC-M4 to penitrems A and E. Synthesis of these final products is proposed to proceed via penitrems D and C (PC-21, PC-05, PC-14) and penitrems B and F (PC-21, PC-05, PC-14, PC-23). The protein is Terpene cyclase penA of Penicillium crustosum (Blue mold fungus).